The chain runs to 591 residues: Phosphoglucan phosphatase LSF1, chloroplastic (591 aa).

A chloroplast-targeting transit peptide spans 1–61 (MAFLQQISGL…RRRRVVLRVV (61 aa)). Positions 291-453 (RYSKITEQIY…VDDGKHDGTP (163 aa)) constitute a Tyrosine-protein phosphatase domain. Cys390 acts as the Phosphocysteine intermediate in catalysis. 390–396 (CTTGFDR) is a binding site for substrate.

It localises to the plastid. Its subcellular location is the chloroplast. In terms of biological role, starch granule-associated phosphoglucan phosphatase involved in the control of starch accumulation. Participates in the regulation of the initial steps of starch degradation at the granule surface. May release a different set of phosphate groups from those removed by DSP4. The chain is Phosphoglucan phosphatase LSF1, chloroplastic (LSF1) from Arabidopsis thaliana (Mouse-ear cress).